Here is a 1040-residue protein sequence, read N- to C-terminus: Contactin-2 (1040 aa).

A signal peptide spans 1 to 30; the sequence is MGTHARKKASLLLLVLATVALVSSPGWSFA. 6 consecutive Ig-like C2-type domains span residues 39–130, 135–224, 241–324, 329–413, 419–506, and 511–605; these read PIFE…AVLR, QEFS…SVFS, PSIK…GRII, PEWL…AELA, PDFR…GILS, and TKIT…ATVL. Intrachain disulfides connect cysteine 63/cysteine 113, cysteine 157/cysteine 209, cysteine 263/cysteine 308, and cysteine 350/cysteine 397. N-linked (GlcNAc...) asparagine glycans are attached at residues asparagine 78, asparagine 200, and asparagine 206. Residues asparagine 463, asparagine 479, asparagine 500, and asparagine 527 are each glycosylated (N-linked (GlcNAc...) asparagine). 4 consecutive Fibronectin type-III domains span residues 612-710, 715-812, 817-913, and 917-1008; these read PPGG…TKEA, APSG…SAEE, APAK…VKPP, and PPGN…NGGT. Asparagine 777 is a glycosylation site (N-linked (GlcNAc...) asparagine). Residues 796-798 carry the Cell attachment site motif; that stretch reads RGD. 3 N-linked (GlcNAc...) asparagine glycosylation sites follow: asparagine 832, asparagine 920, and asparagine 942. The tract at residues 895-921 is disordered; sequence RAGTGPASPSADAMTVKPPPRRPPGNI. Alanine 1015 carries the GPI-anchor amidated alanine lipid modification. Positions 1016 to 1040 are cleaved as a propeptide — removed in mature form; it reads AARPAHPGPAFSCMVILMLAGYQKL.

Belongs to the immunoglobulin superfamily. Contactin family. In terms of tissue distribution, in neural tissues in embryos, and in adult brain, spinal cord and cerebellum.

The protein localises to the cell membrane. In terms of biological role, may play a role in the initial growth and guidance of axons. May be involved in cell adhesion. In conjunction with another transmembrane protein, CNTNAP2, contributes to the organization of axonal domains at nodes of Ranvier by maintaining voltage-gated potassium channels at the juxtaparanodal region. The protein is Contactin-2 (Cntn2) of Rattus norvegicus (Rat).